We begin with the raw amino-acid sequence, 272 residues long: NH(3)-dependent NAD(+) synthetase (272 aa).

ATP is bound at residue glycine 45–serine 52. Residue aspartate 51 participates in Mg(2+) binding. Residue arginine 138 participates in deamido-NAD(+) binding. Threonine 158 contacts ATP. Glutamate 163 is a binding site for Mg(2+). Deamido-NAD(+) is bound by residues lysine 171 and aspartate 178. Residues lysine 187 and threonine 209 each contribute to the ATP site. Histidine 258–lysine 259 lines the deamido-NAD(+) pocket.

This sequence belongs to the NAD synthetase family. In terms of assembly, homodimer.

The catalysed reaction is deamido-NAD(+) + NH4(+) + ATP = AMP + diphosphate + NAD(+) + H(+). It participates in cofactor biosynthesis; NAD(+) biosynthesis; NAD(+) from deamido-NAD(+) (ammonia route): step 1/1. Its function is as follows. Catalyzes the ATP-dependent amidation of deamido-NAD to form NAD. Uses ammonia as a nitrogen source. This chain is NH(3)-dependent NAD(+) synthetase, found in Bacillus cereus (strain 03BB102).